Reading from the N-terminus, the 101-residue chain is Small ribosomal subunit protein uS14 (101 aa).

The protein belongs to the universal ribosomal protein uS14 family. Part of the 30S ribosomal subunit. Contacts proteins S3 and S10.

Binds 16S rRNA, required for the assembly of 30S particles and may also be responsible for determining the conformation of the 16S rRNA at the A site. The polypeptide is Small ribosomal subunit protein uS14 (Paracoccus denitrificans (strain Pd 1222)).